Reading from the N-terminus, the 269-residue chain is 3-methyl-2-oxobutanoate hydroxymethyltransferase (269 aa).

Residues Asp46 and Asp85 each coordinate Mg(2+). 3-methyl-2-oxobutanoate contacts are provided by residues 46-47, Asp85, and Lys114; that span reads DS. A Mg(2+)-binding site is contributed by Glu116. Glu183 acts as the Proton acceptor in catalysis.

It belongs to the PanB family. As to quaternary structure, homodecamer; pentamer of dimers. Mg(2+) is required as a cofactor.

It is found in the cytoplasm. It carries out the reaction 3-methyl-2-oxobutanoate + (6R)-5,10-methylene-5,6,7,8-tetrahydrofolate + H2O = 2-dehydropantoate + (6S)-5,6,7,8-tetrahydrofolate. It functions in the pathway cofactor biosynthesis; (R)-pantothenate biosynthesis; (R)-pantoate from 3-methyl-2-oxobutanoate: step 1/2. Functionally, catalyzes the reversible reaction in which hydroxymethyl group from 5,10-methylenetetrahydrofolate is transferred onto alpha-ketoisovalerate to form ketopantoate. The chain is 3-methyl-2-oxobutanoate hydroxymethyltransferase from Methylococcus capsulatus (strain ATCC 33009 / NCIMB 11132 / Bath).